The chain runs to 416 residues: UDP-N-acetylglucosamine 1-carboxyvinyltransferase (416 aa).

22–23 (KN) contributes to the phosphoenolpyruvate binding site. Position 91 (R91) interacts with UDP-N-acetyl-alpha-D-glucosamine. The Proton donor role is filled by C115. Position 115 is a 2-(S-cysteinyl)pyruvic acid O-phosphothioketal (C115). UDP-N-acetyl-alpha-D-glucosamine-binding positions include 120 to 124 (RPIDL), D305, and I327.

It belongs to the EPSP synthase family. MurA subfamily.

The protein resides in the cytoplasm. It carries out the reaction phosphoenolpyruvate + UDP-N-acetyl-alpha-D-glucosamine = UDP-N-acetyl-3-O-(1-carboxyvinyl)-alpha-D-glucosamine + phosphate. The protein operates within cell wall biogenesis; peptidoglycan biosynthesis. Functionally, cell wall formation. Adds enolpyruvyl to UDP-N-acetylglucosamine. The chain is UDP-N-acetylglucosamine 1-carboxyvinyltransferase from Buchnera aphidicola subsp. Acyrthosiphon pisum (strain 5A).